A 743-amino-acid chain; its full sequence is MATLKPPESQLLKTLTSILTSEKTHFLETLNPYIPQITQPLLTSLLSSPSLAKKPETLVSFFQWAQTSIPEAFPSDSPLPLISVVRSLLSHHKFADAKSLLVSYIRTSDASLSLCNSLLHPNLHLSPPPSKALFDIALSAYLHEGKPHVALQIFQKMIRLKLKPNLLTCNTLLIGLVRYPSSFSISSAREVFDDMVKIGVSLNVQTFNVLVNGYCLEGKLEDALGMLERMVSEFKVNPDNVTYNTILKAMSKKGRLSDLKELLLDMKKNGLVPNRVTYNNLVYGYCKLGSLKEAFQIVELMKQTNVLPDLCTYNILINGLCNAGSMREGLELMDAMKSLKLQPDVVTYNTLIDGCFELGLSLEARKLMEQMENDGVKANQVTHNISLKWLCKEEKREAVTRKVKELVDMHGFSPDIVTYHTLIKAYLKVGDLSGALEMMREMGQKGIKMNTITLNTILDALCKERKLDEAHNLLNSAHKRGFIVDEVTYGTLIMGFFREEKVEKALEMWDEMKKVKITPTVSTFNSLIGGLCHHGKTELAMEKFDELAESGLLPDDSTFNSIILGYCKEGRVEKAFEFYNESIKHSFKPDNYTCNILLNGLCKEGMTEKALNFFNTLIEEREVDTVTYNTMISAFCKDKKLKEAYDLLSEMEEKGLEPDRFTYNSFISLLMEDGKLSETDELLKKFSGKFGSMKRDLQVETEKNPATSESKEELNTEAIAYSDVIDELCSRGRLKEHSRSYTS.

16 PPR repeats span residues 130-164 (SKAL…KLKP), 165-202 (NLLT…GVSL), 203-233 (NVQT…MVSE), 239-273 (DNVT…GLVP), 274-308 (NRVT…NVLP), 309-343 (DLCT…KLQP), 344-378 (DVVT…GVKA), 379-414 (NQVT…GFSP), 415-449 (DIVT…GIKM), 450-484 (NTIT…GFIV), 485-519 (DEVT…KITP), 520-554 (TVST…GLLP), 555-589 (DDST…SFKP), 590-620 (DNYT…LIEE), 624-658 (DTVT…GLEP), and 659-689 (DRFT…FSGK).

It belongs to the PPR family. P subfamily.

In Arabidopsis thaliana (Mouse-ear cress), this protein is Pentatricopeptide repeat-containing protein At2g16880.